The primary structure comprises 270 residues: Cell surface glycoprotein CD200 receptor 4 (270 aa).

The signal sequence occupies residues 1 to 25; the sequence is MHALGRIPTLTLLIFINIFVSGSSC. An Ig-like V-type domain is found at 26-145; it reads TDENQTIQND…GNLEKVYDLQ (120 aa). The Extracellular segment spans residues 26–241; it reads TDENQTIQND…TMTTPRSLLT (216 aa). N-linked (GlcNAc...) asparagine glycosylation is found at Asn-29 and Asn-44. Disulfide bonds link Cys-58-Cys-129, Cys-82-Cys-97, Cys-164-Cys-213, and Cys-183-Cys-201. The region spanning 134–229 is the Ig-like C2-type domain; sequence PEGNLEKVYD…GNQSLSIELS (96 aa). N-linked (GlcNAc...) asparagine glycosylation occurs at Asn-192. The helical transmembrane segment at 242–262 threads the bilayer; that stretch reads ILYVKMALLVIILLNVGFAFF. At 263-270 the chain is on the cytoplasmic side; sequence QKRNFART.

The protein belongs to the CD200R family. As to quaternary structure, interacts with TYROBP. In terms of tissue distribution, highly expressed in monocytes, NK cells and a subset of NKT cells. Weakly expressed in granulocytes and B-cells (at protein level). Expressed in brain, lung, testis, thymus, intestine and uterus. Expressed in bone marrow derived-macrophage and dendritic cells and mast cells.

Its subcellular location is the membrane. In terms of biological role, involved in the recruitment or surface expression of the TYROBP receptor. This is Cell surface glycoprotein CD200 receptor 4 (Cd200r4) from Mus musculus (Mouse).